We begin with the raw amino-acid sequence, 306 residues long: MRRKRGRPIDGWLVIDKPSGMTSTDVVNRVKRLFDARKAGHGGTLDPLATGLLPIAFGAATKTVPYIMDGTKRYEFTLRLGEARDTDDAEGAVIETSDVRPTDDAFRAALPAFRGDIMQVPPIYSAIKVAGERAYDMAREGRAPDLPPRPARVDRFDLVARPDADTAIFAVESGKGVYMRSLARDIARACGTVGHVAALRRLRVGPFSEADAILLDKIVPSDDNAPASPDLLLPVATALADIPALALTHEEADALSHGRAVSLLDLMGRIPDAVDPACGIVRGMDGARVIGLCRLEDGWLRPDRML.

Residue aspartate 46 is the Nucleophile of the active site.

The protein belongs to the pseudouridine synthase TruB family. Type 1 subfamily.

The enzyme catalyses uridine(55) in tRNA = pseudouridine(55) in tRNA. Functionally, responsible for synthesis of pseudouridine from uracil-55 in the psi GC loop of transfer RNAs. This is tRNA pseudouridine synthase B from Gluconacetobacter diazotrophicus (strain ATCC 49037 / DSM 5601 / CCUG 37298 / CIP 103539 / LMG 7603 / PAl5).